Consider the following 977-residue polypeptide: Glycine dehydrogenase (decarboxylating) (977 aa).

At lysine 702 the chain carries N6-(pyridoxal phosphate)lysine.

The protein belongs to the GcvP family. In terms of assembly, the glycine cleavage system is composed of four proteins: P, T, L and H. Requires pyridoxal 5'-phosphate as cofactor.

The enzyme catalyses N(6)-[(R)-lipoyl]-L-lysyl-[glycine-cleavage complex H protein] + glycine + H(+) = N(6)-[(R)-S(8)-aminomethyldihydrolipoyl]-L-lysyl-[glycine-cleavage complex H protein] + CO2. In terms of biological role, the glycine cleavage system catalyzes the degradation of glycine. The P protein binds the alpha-amino group of glycine through its pyridoxal phosphate cofactor; CO(2) is released and the remaining methylamine moiety is then transferred to the lipoamide cofactor of the H protein. The protein is Glycine dehydrogenase (decarboxylating) of Xanthomonas axonopodis pv. citri (strain 306).